We begin with the raw amino-acid sequence, 313 residues long: Formate-nitrite transporter (313 aa).

The Cytoplasmic portion of the chain corresponds to 1-47; sequence MPKSNTKYVIDPLSVKTSCSSEESYIRCVEYGKSKAHYSSLILLAKA. A helical transmembrane segment spans residues 48-68; the sequence is ILAGVFVGVCAHASGIAGGLF. Topologically, residues 69-77 are extracellular; sequence YYHKLREYV. The helical transmembrane segment at 78–98 threads the bilayer; sequence GASMSAFVYGFTFPIAFLCII. At 99–128 the chain is on the cytoplasmic side; the sequence is CTGSDLFTGNTLAVTTALLHGKVSCLEYVR. The chain crosses the membrane as a helical span at residues 129–149; the sequence is VMCISLFGNYVGAVSFAFFVS. Over 150-185 the chain is Extracellular; it reads YGSGAFHKKEQVDKNHIFQFLNDIAVKKVNHTFVEC. Asn-179 carries an N-linked (GlcNAc...) asparagine glycan. The helical transmembrane segment at 186–206 threads the bilayer; it reads ICLAIGCNIFVCLAVYFVLSI. Over 207–211 the chain is Cytoplasmic; the sequence is KDGSG. Residues 212-232 form a helical membrane-spanning segment; the sequence is MVFSVFFAVYAFAIAGYEHII. Topologically, residues 233–260 are extracellular; that stretch reads ANIYTLNISLMIDTEVSFTQVYFKNLLP. Residue Asn-239 is glycosylated (N-linked (GlcNAc...) asparagine). A helical membrane pass occupies residues 261-281; it reads TLIGNYIAGALVLACPLFFIY. Over 282–313 the chain is Cytoplasmic; sequence RSYYINYEKMNEPSGGSLRSISIEMKNDGGAT.

This sequence belongs to the FNT transporter (TC 1.A.16) family. Homopentamer.

Its subcellular location is the cell membrane. The protein resides in the vacuole membrane. The catalysed reaction is (S)-lactate(in) + H(+)(in) = (S)-lactate(out) + H(+)(out). The enzyme catalyses formate(in) + H(+)(in) = formate(out) + H(+)(out). It carries out the reaction pyruvate(out) + H(+)(out) = pyruvate(in) + H(+)(in). It catalyses the reaction acetate(out) + H(+)(out) = acetate(in) + H(+)(in). Its activity is regulated as follows. Inhibited by the Malaria Box compound MMV007839 and its derivatives BH296 and BH267.meta. Its function is as follows. Monocarboxylate-proton symporter that mediates the efflux of the waste product lactate in the intraerythrocytic parasites; active in acidic-to-neutral pH range. Transports L-lactate. This is Formate-nitrite transporter from Plasmodium ovale.